The sequence spans 110 residues: DNA-binding protein Pars_1791 (110 aa).

This sequence belongs to the PDCD5 family.

The sequence is that of DNA-binding protein Pars_1791 from Pyrobaculum arsenaticum (strain DSM 13514 / JCM 11321 / PZ6).